Reading from the N-terminus, the 245-residue chain is 1-(5-phosphoribosyl)-5-[(5-phosphoribosylamino)methylideneamino] imidazole-4-carboxamide isomerase (245 aa).

D8 acts as the Proton acceptor in catalysis. D129 functions as the Proton donor in the catalytic mechanism.

It belongs to the HisA/HisF family.

It is found in the cytoplasm. The catalysed reaction is 1-(5-phospho-beta-D-ribosyl)-5-[(5-phospho-beta-D-ribosylamino)methylideneamino]imidazole-4-carboxamide = 5-[(5-phospho-1-deoxy-D-ribulos-1-ylimino)methylamino]-1-(5-phospho-beta-D-ribosyl)imidazole-4-carboxamide. Its pathway is amino-acid biosynthesis; L-histidine biosynthesis; L-histidine from 5-phospho-alpha-D-ribose 1-diphosphate: step 4/9. This Geotalea daltonii (strain DSM 22248 / JCM 15807 / FRC-32) (Geobacter daltonii) protein is 1-(5-phosphoribosyl)-5-[(5-phosphoribosylamino)methylideneamino] imidazole-4-carboxamide isomerase.